Here is a 449-residue protein sequence, read N- to C-terminus: Protein adenylyltransferase FICD (449 aa).

A helical membrane pass occupies residues 15-35 (LLWGWGPILFGLLGSVFVLLL). TPR repeat units lie at residues 96 to 129 (AKAALQQALEMKKSGKREKAHKLLVHALNMNPEF) and 130 to 163 (VEALTELGTILEEEKDVVQADHLYTKALAISPCH). The Inhibitory (S/T)XXXE(G/N) motif signature appears at 220–225 (TVAIEG). ATP contacts are provided by residues Glu-224, 250 to 251 (EQ), 358 to 360 (GNG), and Arg-364. The Fido domain occupies 275 to 410 (ITVNDILEIH…VRPFIRFIAK (136 aa)).

The protein belongs to the fic family.

The protein resides in the membrane. The enzyme catalyses L-tyrosyl-[protein] + ATP = O-(5'-adenylyl)-L-tyrosyl-[protein] + diphosphate. It catalyses the reaction L-threonyl-[protein] + ATP = 3-O-(5'-adenylyl)-L-threonyl-[protein] + diphosphate. With respect to regulation, adenylyltransferase activity is inhibited by the inhibitory helix present at the N-terminus: Glu-224 binds ATP and competes with ATP-binding at Arg-364, thereby preventing adenylyltransferase activity. Activation dissociates ATP-binding from Glu-224, allowing ordered binding of the entire ATP moiety with the alpha-phosphate in an orientation that is productive for accepting an incoming target hydroxyl side chain. Its function is as follows. Adenylyltransferase that mediates the addition of adenosine 5'-monophosphate (AMP) to specific residues of target proteins. The protein is Protein adenylyltransferase FICD (ficd) of Danio rerio (Zebrafish).